A 452-amino-acid polypeptide reads, in one-letter code: DNA primase DnaG (452 aa).

Residues Asp172–Pro248 form the Toprim domain. The Mg(2+) site is built by Glu178, Asp222, and Asp224. The segment at Lys289–Gln320 is disordered. The span at Gln294–Gln320 shows a compositional bias: low complexity.

It belongs to the archaeal DnaG primase family. In terms of assembly, forms a ternary complex with MCM helicase and DNA. Component of the archaeal exosome complex. Mg(2+) is required as a cofactor.

It catalyses the reaction ssDNA + n NTP = ssDNA/pppN(pN)n-1 hybrid + (n-1) diphosphate.. RNA polymerase that catalyzes the synthesis of short RNA molecules used as primers for DNA polymerase during DNA replication. Also part of the exosome, which is a complex involved in RNA degradation. Acts as a poly(A)-binding protein that enhances the interaction between heteromeric, adenine-rich transcripts and the exosome. This Caldivirga maquilingensis (strain ATCC 700844 / DSM 13496 / JCM 10307 / IC-167) protein is DNA primase DnaG.